The primary structure comprises 669 residues: Bestrophin-3 (669 aa).

Residues Met1 to Leu31 lie on the Cytoplasmic side of the membrane. Residue Ala10 coordinates Ca(2+). Residues Leu32–Arg51 form a helical membrane-spanning segment. Topologically, residues Leu52 to Arg60 are extracellular. A helical transmembrane segment spans residues Tyr61–Leu82. The Cytoplasmic segment spans residues Gly83–Thr237. A helical transmembrane segment spans residues Gln238 to Arg255. The Extracellular segment spans residues Gln256–Pro274. The helical transmembrane segment at Ile275–Leu288 threads the bilayer. Topologically, residues Lys289–Phe669 are cytoplasmic. 4 residues coordinate Ca(2+): Gln293, Asn296, Asp301, and Asp304. Disordered stretches follow at residues Leu399–Pro496, Gln533–Thr560, Thr591–Ser627, and Ile646–Phe669. Over residues Asn440–Ser451 the composition is skewed to basic residues. Residues Arg475–Pro492 show a composition bias toward low complexity. Over residues Gln533–Pro543 the composition is skewed to polar residues. Residues Ile646 to Glu656 are compositionally biased toward basic and acidic residues.

The protein belongs to the anion channel-forming bestrophin (TC 1.A.46) family. Calcium-sensitive chloride channel subfamily. As to expression, expressed in heart. In terms of tissue distribution, expressed in brain, retina/retinal pigment epithelium (RPE) and skeletal muscle. Expressed in acinar cells of parotid glands. Expressed in lung, kidney and testis.

The protein localises to the cell membrane. It carries out the reaction chloride(in) = chloride(out). Functionally, ligand-gated anion channel that allows the movement of chloride monoatomic anions across cell membranes when activated by calcium (Ca2+). Its function is as follows. Does not function as calcium-gated chloride channel. This Mus musculus (Mouse) protein is Bestrophin-3 (Best3).